Reading from the N-terminus, the 103-residue chain is Large ribosomal subunit protein bL21 (103 aa).

It belongs to the bacterial ribosomal protein bL21 family. Part of the 50S ribosomal subunit. Contacts protein L20.

Functionally, this protein binds to 23S rRNA in the presence of protein L20. This chain is Large ribosomal subunit protein bL21, found in Brevibacillus brevis (strain 47 / JCM 6285 / NBRC 100599).